The sequence spans 310 residues: Probable metallo-hydrolase Mb2322c (310 aa).

The interval 1 to 29 (MVATRGRPCPTNFSRPQRPRVAGNGTKSQ) is disordered. Residues H137, D139, D141, H142, H221, D242, and H288 each contribute to the Zn(2+) site.

It belongs to the metallo-beta-lactamase superfamily. Zn(2+) serves as cofactor.

This is Probable metallo-hydrolase Mb2322c from Mycobacterium bovis (strain ATCC BAA-935 / AF2122/97).